Here is a 767-residue protein sequence, read N- to C-terminus: TBC1 domain family member 16 (767 aa).

Disordered regions lie at residues 93 to 138 (EALR…TPKD) and 169 to 228 (GVDG…SFDS). Positions 107 to 117 (KAPRPRGRRTR) are enriched in basic residues. A compositionally biased stretch (polar residues) spans 175 to 194 (PASQPACSPSGILSTVSPQD). Residues 197–206 (EEGREPRPEA) show a composition bias toward basic and acidic residues. The region spanning 425–635 (GIDVSIRGEV…RIWEACWAHY (211 aa)) is the Rab-GAP TBC domain. A disordered region spans residues 729 to 767 (HPGSESCPYGGTVEMPSPKSLREGKKGPKTPQDGFGFRR).

Its function is as follows. May act as a GTPase-activating protein for Rab family protein(s). This Homo sapiens (Human) protein is TBC1 domain family member 16 (TBC1D16).